A 198-amino-acid polypeptide reads, in one-letter code: HTH-type transcriptional regulator BetI (198 aa).

An HTH tetR-type domain is found at 8 to 68 (PLRRRELIDA…ATMRHLLREL (61 aa)). The segment at residues 31–50 (TVAQIAHEAGVSPALAHHYF) is a DNA-binding region (H-T-H motif).

The protein operates within amine and polyamine biosynthesis; betaine biosynthesis via choline pathway [regulation]. Functionally, repressor involved in the biosynthesis of the osmoprotectant glycine betaine. It represses transcription of the choline transporter BetT and the genes of BetAB involved in the synthesis of glycine betaine. The polypeptide is HTH-type transcriptional regulator BetI (Brucella abortus (strain 2308)).